The sequence spans 108 residues: Thiosulfate sulfurtransferase GlpE (108 aa).

The Rhodanese domain occupies 17 to 105 (QEKEAVLVDI…WQRQFPAEVA (89 aa)). C65 functions as the Cysteine persulfide intermediate in the catalytic mechanism.

It belongs to the GlpE family.

Its subcellular location is the cytoplasm. It carries out the reaction thiosulfate + hydrogen cyanide = thiocyanate + sulfite + 2 H(+). The catalysed reaction is thiosulfate + [thioredoxin]-dithiol = [thioredoxin]-disulfide + hydrogen sulfide + sulfite + 2 H(+). In terms of biological role, transferase that catalyzes the transfer of sulfur from thiosulfate to thiophilic acceptors such as cyanide or dithiols. May function in a CysM-independent thiosulfate assimilation pathway by catalyzing the conversion of thiosulfate to sulfite, which can then be used for L-cysteine biosynthesis. The polypeptide is Thiosulfate sulfurtransferase GlpE (Escherichia coli O8 (strain IAI1)).